The chain runs to 298 residues: 4-diphosphocytidyl-2-C-methyl-D-erythritol kinase (298 aa).

Lys15 is a catalytic residue. 102–112 (PVAAGIGGGSS) provides a ligand contact to ATP. Asp142 is an active-site residue.

This sequence belongs to the GHMP kinase family. IspE subfamily.

The enzyme catalyses 4-CDP-2-C-methyl-D-erythritol + ATP = 4-CDP-2-C-methyl-D-erythritol 2-phosphate + ADP + H(+). It functions in the pathway isoprenoid biosynthesis; isopentenyl diphosphate biosynthesis via DXP pathway; isopentenyl diphosphate from 1-deoxy-D-xylulose 5-phosphate: step 3/6. Its function is as follows. Catalyzes the phosphorylation of the position 2 hydroxy group of 4-diphosphocytidyl-2C-methyl-D-erythritol. The chain is 4-diphosphocytidyl-2-C-methyl-D-erythritol kinase from Hyphomonas neptunium (strain ATCC 15444).